Here is a 155-residue protein sequence, read N- to C-terminus: Small ribosomal subunit protein uS13 (155 aa).

Residues 135-145 (QHTKTTGRRGR) show a composition bias toward basic residues. A disordered region spans residues 135 to 155 (QHTKTTGRRGRTVGVSRTKGA). The span at 146–155 (TVGVSRTKGA) shows a compositional bias: low complexity.

This sequence belongs to the universal ribosomal protein uS13 family. Component of the small ribosomal subunit.

Its subcellular location is the cytoplasm. Component of the small ribosomal subunit. The ribosome is a large ribonucleoprotein complex responsible for the synthesis of proteins in the cell. This is Small ribosomal subunit protein uS13 (RPS18) from Entamoeba histolytica (strain ATCC 30459 / HM-1:IMSS / ABRM).